A 64-amino-acid polypeptide reads, in one-letter code: Small ribosomal subunit protein bS18c (64 aa).

It belongs to the bacterial ribosomal protein bS18 family. Part of the 30S ribosomal subunit.

It localises to the plastid. It is found in the chloroplast. The polypeptide is Small ribosomal subunit protein bS18c (rps18) (Bigelowiella natans (Pedinomonas minutissima)).